The chain runs to 158 residues: Ecotin (158 aa).

Positions 1 to 21 (MRLLPLASVTLLSVLCAQAFA) are cleaved as a signal peptide. Cys-67 and Cys-104 form a disulfide bridge.

The protein belongs to the protease inhibitor I11 (ecotin) family. In terms of assembly, homodimer.

It localises to the periplasm. General inhibitor of family S1 serine proteases. This chain is Ecotin, found in Pseudomonas fluorescens (strain ATCC BAA-477 / NRRL B-23932 / Pf-5).